Consider the following 1320-residue polypeptide: Clustered mitochondria protein homolog (1320 aa).

Disordered regions lie at residues 166–241, 552–582, and 683–708; these read QQLE…KQKM, YGSM…TKSI, and LKEK…EDVQ. Residues 185-194 are compositionally biased toward basic and acidic residues; that stretch reads TEDKEEKETI. Basic residues predominate over residues 202 to 213; sequence KKNKHHNKKGNK. 3 stretches are compositionally biased toward basic and acidic residues: residues 226–241, 565–575, and 683–695; these read NEEK…KQKM, QQQKEENEENK, and LKEK…KEGI. The Clu domain maps to 379 to 649; that stretch reads KTNRYDINKG…KATPRDPNYT (271 aa). 5 TPR repeats span residues 955 to 988, 997 to 1030, 1039 to 1072, 1081 to 1114, and 1123 to 1156; these read GLDL…YHQV, GACF…TEKT, VQAY…TDLL, ASIY…QEFL, and STTY…LEKE. Positions 1204 to 1320 are disordered; sequence KADQFKKSQP…SKPNKKSSKN (117 aa). The segment covering 1237 to 1247 has biased composition (basic residues); sequence KPKKSQSKKSK. A compositionally biased stretch (low complexity) spans 1248–1311; sequence STNTTTTTNT…PTSSSAADSS (64 aa).

This sequence belongs to the CLU family.

It localises to the cytoplasm. Functionally, mRNA-binding protein involved in proper cytoplasmic distribution of mitochondria. This Dictyostelium discoideum (Social amoeba) protein is Clustered mitochondria protein homolog.